A 427-amino-acid polypeptide reads, in one-letter code: Glutamate-1-semialdehyde 2,1-aminomutase (427 aa).

Lysine 265 carries the N6-(pyridoxal phosphate)lysine modification.

It belongs to the class-III pyridoxal-phosphate-dependent aminotransferase family. HemL subfamily. In terms of assembly, homodimer. It depends on pyridoxal 5'-phosphate as a cofactor.

The protein localises to the cytoplasm. It carries out the reaction (S)-4-amino-5-oxopentanoate = 5-aminolevulinate. Its pathway is porphyrin-containing compound metabolism; protoporphyrin-IX biosynthesis; 5-aminolevulinate from L-glutamyl-tRNA(Glu): step 2/2. The sequence is that of Glutamate-1-semialdehyde 2,1-aminomutase from Burkholderia pseudomallei (strain 1710b).